The sequence spans 203 residues: MPKVVFHYFGAKGWARPTMLLAYGGQEFEDHRVEYEQWPEFKPNTPFGQMPVLEIDGKKYAQSLAISRYLGRKYGLAGNDIEEDFEIDQIVDFVNDIRASAASVEYEQDAANKEVKHEENMKNKYPFQLNKLSEIITKNNGFLALGRLTWADFVFVGMFDYLKKMLRMPDLEEQYPIFKKPIETVLSNPKLKAYLDSAPKKEF.

Residues 1–78 (MPKVVFHYFG…YLGRKYGLAG (78 aa)) form the GST N-terminal domain. Glutathione-binding positions include Y8, W38, K42, 48 to 50 (GQM), and 62 to 63 (QS). Residues 80–203 (DIEEDFEIDQ…YLDSAPKKEF (124 aa)) enclose the GST C-terminal domain.

Belongs to the GST superfamily. Sigma family. As to quaternary structure, homodimer.

It carries out the reaction RX + glutathione = an S-substituted glutathione + a halide anion + H(+). Its function is as follows. Conjugation of reduced glutathione to a wide number of exogenous and endogenous hydrophobic electrophiles. The chain is Glutathione S-transferase 2 (GST2) from Manduca sexta (Tobacco hawkmoth).